We begin with the raw amino-acid sequence, 780 residues long: Aconitate hydratase, mitochondrial (780 aa).

The transit peptide at 1–27 (MAPYSLLVTRLQKALGVRQYHVASVLC) directs the protein to the mitochondrion. The residue at position 31 (lysine 31) is an N6-succinyllysine. Lysine 50 bears the N6-acetyllysine; alternate mark. The residue at position 50 (lysine 50) is an N6-succinyllysine; alternate. Residue glutamine 99 participates in substrate binding. Lysine 138 and lysine 144 each carry N6-acetyllysine; alternate. Lysine 138 and lysine 144 each carry N6-succinyllysine; alternate. Residue 192-194 (DSH) coordinates substrate. Lysine 233 carries the N6-acetyllysine; alternate modification. Lysine 233 bears the N6-succinyllysine; alternate mark. Cysteine 385 provides a ligand contact to [4Fe-4S] cluster. The residue at position 411 (lysine 411) is an N6-succinyllysine. Residues cysteine 448 and cysteine 451 each coordinate [4Fe-4S] cluster. Positions 474 and 479 each coordinate substrate. Residues lysine 517 and lysine 523 each carry the N6-acetyllysine; alternate modification. An N6-succinyllysine; alternate mark is found at lysine 517 and lysine 523. Positions 524 to 537 (LEAPDADELPRSDF) are enriched in basic and acidic residues. Positions 524–560 (LEAPDADELPRSDFDPGQDTYQHPPKDSSGQRVDVSP) are disordered. At lysine 549 the chain carries N6-succinyllysine. Over residues 551-560 (SSGQRVDVSP) the composition is skewed to polar residues. Position 559 is a phosphoserine (serine 559). Residue lysine 573 is modified to N6-acetyllysine; alternate. Lysine 573 bears the N6-succinyllysine; alternate mark. N6-succinyllysine is present on residues lysine 577 and lysine 591. Lysine 605 is subject to N6-acetyllysine; alternate. Position 605 is an N6-succinyllysine; alternate (lysine 605). Arginine 607 contributes to the substrate binding site. N6-succinyllysine is present on lysine 628. The residue at position 670 (serine 670) is a Phosphoserine. 670 to 671 (SR) is a substrate binding site. Lysine 689 bears the N6-succinyllysine mark. An N6-acetyllysine; alternate mark is found at lysine 723 and lysine 730. N6-succinyllysine; alternate occurs at positions 723 and 730. Lysine 736, lysine 739, and lysine 743 each carry N6-acetyllysine.

It belongs to the aconitase/IPM isomerase family. In terms of assembly, monomer. [4Fe-4S] cluster is required as a cofactor. Forms covalent cross-links mediated by transglutaminase TGM2, between a glutamine and the epsilon-amino group of a lysine residue, forming homopolymers and heteropolymers.

It is found in the mitochondrion. It catalyses the reaction citrate = D-threo-isocitrate. It participates in carbohydrate metabolism; tricarboxylic acid cycle; isocitrate from oxaloacetate: step 2/2. Catalyzes the isomerization of citrate to isocitrate via cis-aconitate. The protein is Aconitate hydratase, mitochondrial (Aco2) of Mus musculus (Mouse).